The sequence spans 115 residues: Basic leucine zipper transcriptional factor ATF-like (115 aa).

The segment at 1-60 (MQQESDRNEQGYSSSPPSSNKQDSSDDTKKNHRREKNRIAAQKSRQRQTEKADSLHIESE) is disordered. Over residues 13–22 (SSSPPSSNKQ) the composition is skewed to low complexity. In terms of domain architecture, bZIP spans 27-90 (DTKKNHRREK…KYLTCVLSTH (64 aa)). The segment at 29–51 (KKNHRREKNRIAAQKSRQRQTEK) is basic motif. A compositionally biased stretch (basic and acidic residues) spans 47–60 (RQTEKADSLHIESE). Residues 55-83 (LHIESENLERLNSALRGEISGLREELKYL) are leucine-zipper.

It belongs to the bZIP family.

Its subcellular location is the nucleus. The protein resides in the cytoplasm. Its function is as follows. AP-1 family transcription factor that controls the differentiation of lineage-specific cells in the immune system: specifically mediates the differentiation of T-helper 17 cells (Th17), follicular T-helper cells (TfH), CD8(+) dendritic cells and class-switch recombination (CSR) in B-cells. The protein is Basic leucine zipper transcriptional factor ATF-like (batf) of Xenopus laevis (African clawed frog).